The primary structure comprises 432 residues: Adenosine 3'-phospho 5'-phosphosulfate transporter 1 (432 aa).

A run of 9 helical transmembrane segments spans residues 5–25, 40–60, 109–129, 154–174, 238–258, 265–285, 299–319, 353–373, and 387–407; these read WWAV…ETPE, VVNA…VQYF, ALKL…WGVL, FLVL…CVLC, WEYL…LSSG, PATT…DSFT, SVQM…GSLL, LFIF…IMTL, and GHTV…ALLL. Phosphoserine is present on Ser-427.

The protein belongs to the nucleotide-sugar transporter family. SLC35B subfamily.

It is found in the golgi apparatus membrane. It catalyses the reaction 3'-phosphoadenylyl sulfate(in) + adenosine 3',5'-bisphosphate(out) = 3'-phosphoadenylyl sulfate(out) + adenosine 3',5'-bisphosphate(in). Its function is as follows. Probably functions as a 3'-phosphoadenylyl sulfate:adenosine 3',5'-bisphosphate antiporter at the Golgi membranes. Mediates the transport from the cytosol into the lumen of the Golgi of 3'-phosphoadenylyl sulfate/adenosine 3'-phospho 5'-phosphosulfate (PAPS), a universal sulfuryl donor for sulfation events that take place in that compartment. The sequence is that of Adenosine 3'-phospho 5'-phosphosulfate transporter 1 from Pongo abelii (Sumatran orangutan).